A 675-amino-acid polypeptide reads, in one-letter code: uncharacterized protein (675 aa).

The next 4 membrane-spanning stretches (helical) occupy residues 2–22 (QHTF…DFFF), 397–417 (LFLL…VFIA), 448–468 (LLVA…LCCY), and 481–501 (IFVY…TYAA). 2 disordered regions span residues 616 to 635 (YSPN…DIND) and 646 to 675 (QRMG…ELSD). Acidic residues predominate over residues 665–675 (VFSESDEELSD). The residue at position 669 (Ser669) is a Phosphoserine.

It belongs to the 1-acyl-sn-glycerol-3-phosphate acyltransferase family.

It localises to the endoplasmic reticulum membrane. This is an uncharacterized protein from Schizosaccharomyces pombe (strain 972 / ATCC 24843) (Fission yeast).